Reading from the N-terminus, the 639-residue chain is E3 ubiquitin-protein ligase RNF12 (639 aa).

Disordered stretches follow at residues Met1 to Arg28, Arg67 to Arg403, and Asn467 to Thr534. Residues Ser11–Ser21 are compositionally biased toward low complexity. Polar residues-rich tracts occupy residues Ser110–Ser138 and Ile147–Glu166. The segment covering Arg213–Arg228 has biased composition (basic and acidic residues). Residues His244–Ser253 are compositionally biased toward polar residues. Low complexity predominate over residues Ser269–Arg286. Residues His290–Gly302 are compositionally biased toward polar residues. Low complexity-rich tracts occupy residues Gln303 to Thr327 and Ser335 to Ser348. Polar residues predominate over residues Asn349–Arg358. Residues Arg372–Ile382 are compositionally biased toward basic and acidic residues. Residues Ala383 to Tyr399 are compositionally biased toward polar residues. 2 stretches are compositionally biased toward pro residues: residues Asn473–Ala482 and Pro493–Val506. The RING-type; atypical zinc finger occupies Cys585–Arg626. Residues Glu636–Val639 carry the PDZ-binding motif.

The protein belongs to the RNF12 family. As to quaternary structure, forms homodimers through the C-terminal region. The N-terminus interacts with the homeobox of LIM/homeobox factor lhx1/lim1, with lhx3/lim3 and lhx5/lim5, and with the N-terminus of ldb1.

Its subcellular location is the nucleus. The catalysed reaction is S-ubiquitinyl-[E2 ubiquitin-conjugating enzyme]-L-cysteine + [acceptor protein]-L-lysine = [E2 ubiquitin-conjugating enzyme]-L-cysteine + N(6)-ubiquitinyl-[acceptor protein]-L-lysine.. The protein operates within protein modification; protein ubiquitination. Functionally, acts as an E3 ubiquitin-protein ligase specific for ldb1, mediating ubiquitination and proteasome-dependent degradation of excess ldb1 in a RING-dependent manner. Does not degrade ldb1 bound to lhx1/lim1, nor lim1 itself and thus contributes to the establishment of proper ldb1-lhx1/lim1 stoichiometry and the formation of a ldb1-lhx1/lim1 complex. Interferes with Spemann organizer function and suppresses secondary axis formation induced by ldb1 and lhx1/lim1. In Xenopus tropicalis (Western clawed frog), this protein is E3 ubiquitin-protein ligase RNF12.